Reading from the N-terminus, the 163-residue chain is Putative H/ACA ribonucleoprotein complex subunit 2-like protein (163 aa).

Belongs to the eukaryotic ribosomal protein eL8 family. As to quaternary structure, component of the small nucleolar ribonucleoprotein particle containing H/ACA-type snoRNAs (H/ACA snoRNPs).

Its subcellular location is the nucleus. The protein localises to the nucleolus. In terms of biological role, required for ribosome biogenesis. Part of a complex which catalyzes pseudouridylation of rRNA. This involves the isomerization of uridine such that the ribose is subsequently attached to C5, instead of the normal N1. Pseudouridine ('psi') residues may serve to stabilize the conformation of rRNAs. The chain is Putative H/ACA ribonucleoprotein complex subunit 2-like protein from Caenorhabditis briggsae.